We begin with the raw amino-acid sequence, 476 residues long: Proline--tRNA ligase (476 aa).

This sequence belongs to the class-II aminoacyl-tRNA synthetase family. ProS type 3 subfamily. As to quaternary structure, homodimer.

The protein localises to the cytoplasm. It carries out the reaction tRNA(Pro) + L-proline + ATP = L-prolyl-tRNA(Pro) + AMP + diphosphate. Catalyzes the attachment of proline to tRNA(Pro) in a two-step reaction: proline is first activated by ATP to form Pro-AMP and then transferred to the acceptor end of tRNA(Pro). This Rubrobacter xylanophilus (strain DSM 9941 / JCM 11954 / NBRC 16129 / PRD-1) protein is Proline--tRNA ligase.